We begin with the raw amino-acid sequence, 463 residues long: Dipeptidyl peptidase 1 (463 aa).

The signal sequence occupies residues 1–24 (MGPWSGSRLVALLLLVYGAGSVRG). Residues Asn29 and Asn53 are each glycosylated (N-linked (GlcNAc...) asparagine). 2 disulfide bridges follow: Cys30/Cys118 and Cys54/Cys136. Residues 135-230 (ACFTGRKTGN…TAEIQKKILH (96 aa)) constitute a propeptide that is removed on maturation. Asn144 carries an N-linked (GlcNAc...) asparagine glycan. Intrachain disulfides connect Cys255-Cys298, Cys291-Cys331, and Cys321-Cys337. Cys258 is a catalytic residue. N-linked (GlcNAc...) asparagine glycosylation occurs at Asn276. Chloride is bound by residues Phe302 and Tyr304. Residue Tyr347 participates in chloride binding. Residues His405 and Asn427 contribute to the active site.

This sequence belongs to the peptidase C1 family. In terms of assembly, tetramer of heterotrimers consisting of exclusion domain, heavy- and light chains. It depends on chloride as a cofactor.

It is found in the lysosome. The enzyme catalyses Release of an N-terminal dipeptide, Xaa-Yaa-|-Zaa-, except when Xaa is Arg or Lys, or Yaa or Zaa is Pro.. Functionally, thiol protease. Has dipeptidylpeptidase activity. Active against a broad range of dipeptide substrates composed of both polar and hydrophobic amino acids. Proline cannot occupy the P1 position and arginine cannot occupy the P2 position of the substrate. Can act as both an exopeptidase and endopeptidase. Activates serine proteases such as elastase, cathepsin G and granzymes A and B. The chain is Dipeptidyl peptidase 1 (CTSC) from Bos taurus (Bovine).